A 129-amino-acid polypeptide reads, in one-letter code: Small ribosomal subunit protein uS11 (129 aa).

The protein belongs to the universal ribosomal protein uS11 family. In terms of assembly, part of the 30S ribosomal subunit. Interacts with proteins S7 and S18. Binds to IF-3.

Its function is as follows. Located on the platform of the 30S subunit, it bridges several disparate RNA helices of the 16S rRNA. Forms part of the Shine-Dalgarno cleft in the 70S ribosome. The polypeptide is Small ribosomal subunit protein uS11 (Bacillus cereus (strain ATCC 14579 / DSM 31 / CCUG 7414 / JCM 2152 / NBRC 15305 / NCIMB 9373 / NCTC 2599 / NRRL B-3711)).